We begin with the raw amino-acid sequence, 79 residues long: Protein NOI4 (79 aa).

The disordered stretch occupies residues Lys-31–Trp-68. Ser-44 is modified (phosphoserine).

This sequence belongs to the RIN4 family. Post-translationally, proteolytic cleaved by P.syringae pv tomato AvrRpt2 after Gly-12; this cleavage is critical for subsequent proteasome-dependent elimination.

The polypeptide is Protein NOI4 (Arabidopsis thaliana (Mouse-ear cress)).